Consider the following 227-residue polypeptide: Probable methylthioribulose-1-phosphate dehydratase (227 aa).

Cysteine 87 serves as a coordination point for substrate. The Zn(2+) site is built by histidine 105 and histidine 107. The active-site Proton donor/acceptor is glutamate 129. Residue histidine 185 coordinates Zn(2+).

This sequence belongs to the aldolase class II family. MtnB subfamily. Requires Zn(2+) as cofactor.

The protein resides in the cytoplasm. The enzyme catalyses 5-(methylsulfanyl)-D-ribulose 1-phosphate = 5-methylsulfanyl-2,3-dioxopentyl phosphate + H2O. The protein operates within amino-acid biosynthesis; L-methionine biosynthesis via salvage pathway; L-methionine from S-methyl-5-thio-alpha-D-ribose 1-phosphate: step 2/6. Catalyzes the dehydration of methylthioribulose-1-phosphate (MTRu-1-P) into 2,3-diketo-5-methylthiopentyl-1-phosphate (DK-MTP-1-P). The protein is Probable methylthioribulose-1-phosphate dehydratase of Drosophila melanogaster (Fruit fly).